Consider the following 155-residue polypeptide: SsrA-binding protein (155 aa).

Belongs to the SmpB family.

The protein localises to the cytoplasm. Functionally, required for rescue of stalled ribosomes mediated by trans-translation. Binds to transfer-messenger RNA (tmRNA), required for stable association of tmRNA with ribosomes. tmRNA and SmpB together mimic tRNA shape, replacing the anticodon stem-loop with SmpB. tmRNA is encoded by the ssrA gene; the 2 termini fold to resemble tRNA(Ala) and it encodes a 'tag peptide', a short internal open reading frame. During trans-translation Ala-aminoacylated tmRNA acts like a tRNA, entering the A-site of stalled ribosomes, displacing the stalled mRNA. The ribosome then switches to translate the ORF on the tmRNA; the nascent peptide is terminated with the 'tag peptide' encoded by the tmRNA and targeted for degradation. The ribosome is freed to recommence translation, which seems to be the essential function of trans-translation. The polypeptide is SsrA-binding protein (Alkaliphilus oremlandii (strain OhILAs) (Clostridium oremlandii (strain OhILAs))).